The sequence spans 336 residues: Cell division protein ZipA (336 aa).

Residues 1–6 (MEDLQL) lie on the Periplasmic side of the membrane. The helical transmembrane segment at 7 to 27 (VLFVLGAIAIIAVLVHGFWSI) threads the bilayer. Residues 28–336 (RKQQPKPIKE…DYLRRIKAIV (309 aa)) are Cytoplasmic-facing. Disordered stretches follow at residues 31–118 (QPKP…PVRA) and 174–200 (YGAT…EPLG). Polar residues predominate over residues 73-91 (LPSSRNHTSVPVMTLQKAS). Basic and acidic residues predominate over residues 108 to 118 (TTAERAEPVRA). Residues 179 to 193 (QASPQPASPVQSQAP) are compositionally biased toward low complexity.

This sequence belongs to the ZipA family. Interacts with FtsZ via their C-terminal domains.

Its subcellular location is the cell inner membrane. Essential cell division protein that stabilizes the FtsZ protofilaments by cross-linking them and that serves as a cytoplasmic membrane anchor for the Z ring. Also required for the recruitment to the septal ring of downstream cell division proteins. This Shewanella denitrificans (strain OS217 / ATCC BAA-1090 / DSM 15013) protein is Cell division protein ZipA.